The chain runs to 213 residues: Pyridoxine/pyridoxamine 5'-phosphate oxidase (213 aa).

Substrate contacts are provided by residues 8 to 11 (RKNY) and K66. FMN is bound by residues 61 to 66 (RIVLIK), 76 to 77 (FT), R82, K83, and Q105. Positions 123, 127, and 131 each coordinate substrate. FMN contacts are provided by residues 140–141 (QS) and W184. 190 to 192 (RLH) is a substrate binding site. R194 provides a ligand contact to FMN.

The protein belongs to the pyridoxamine 5'-phosphate oxidase family. In terms of assembly, homodimer. FMN serves as cofactor.

The enzyme catalyses pyridoxamine 5'-phosphate + O2 + H2O = pyridoxal 5'-phosphate + H2O2 + NH4(+). It catalyses the reaction pyridoxine 5'-phosphate + O2 = pyridoxal 5'-phosphate + H2O2. It functions in the pathway cofactor metabolism; pyridoxal 5'-phosphate salvage; pyridoxal 5'-phosphate from pyridoxamine 5'-phosphate: step 1/1. The protein operates within cofactor metabolism; pyridoxal 5'-phosphate salvage; pyridoxal 5'-phosphate from pyridoxine 5'-phosphate: step 1/1. Its function is as follows. Catalyzes the oxidation of either pyridoxine 5'-phosphate (PNP) or pyridoxamine 5'-phosphate (PMP) into pyridoxal 5'-phosphate (PLP). In Paraburkholderia xenovorans (strain LB400), this protein is Pyridoxine/pyridoxamine 5'-phosphate oxidase.